Consider the following 187-residue polypeptide: Large ribosomal subunit protein uL5 (187 aa).

It belongs to the universal ribosomal protein uL5 family. As to quaternary structure, part of the 50S ribosomal subunit; part of the 5S rRNA/L5/L18/L25 subcomplex. Contacts the 5S rRNA and the P site tRNA. Forms a bridge to the 30S subunit in the 70S ribosome.

Its function is as follows. This is one of the proteins that bind and probably mediate the attachment of the 5S RNA into the large ribosomal subunit, where it forms part of the central protuberance. In the 70S ribosome it contacts protein S13 of the 30S subunit (bridge B1b), connecting the 2 subunits; this bridge is implicated in subunit movement. Contacts the P site tRNA; the 5S rRNA and some of its associated proteins might help stabilize positioning of ribosome-bound tRNAs. In Corynebacterium diphtheriae (strain ATCC 700971 / NCTC 13129 / Biotype gravis), this protein is Large ribosomal subunit protein uL5.